Here is a 305-residue protein sequence, read N- to C-terminus: Protein MFI (305 aa).

In terms of assembly, can homodimerize. Interacts with MFF; the interaction inhibits MFF interaction with DNM1L.

The protein resides in the cytoplasm. It is found in the cytosol. It localises to the mitochondrion outer membrane. In terms of biological role, acts as an inhibitor of mitochondrial fission. Interacts with MFF and prevents DNM1L recruitment to mitochondria, promoting a more fused mitochondrial network. This Rattus norvegicus (Rat) protein is Protein MFI.